A 453-amino-acid polypeptide reads, in one-letter code: GTPase Der (453 aa).

EngA-type G domains follow at residues 4–169 and 177–352; these read PIVA…PPTT and IKIA…EEHK. GTP-binding positions include 10-17, 57-61, 120-123, 183-190, 230-234, and 295-298; these read GRPNVGKS, DTGGL, NKCE, DTAGI, and NKWD. A KH-like domain is found at 353–438; that stretch reads RRVSTSVINE…PIRLLWRSKK (86 aa).

Belongs to the TRAFAC class TrmE-Era-EngA-EngB-Septin-like GTPase superfamily. EngA (Der) GTPase family. As to quaternary structure, associates with the 50S ribosomal subunit.

Its function is as follows. GTPase that plays an essential role in the late steps of ribosome biogenesis. This chain is GTPase Der, found in Trichormus variabilis (strain ATCC 29413 / PCC 7937) (Anabaena variabilis).